The sequence spans 201 residues: 3-isopropylmalate dehydratase small subunit (201 aa).

It belongs to the LeuD family. LeuD type 1 subfamily. In terms of assembly, heterodimer of LeuC and LeuD.

The catalysed reaction is (2R,3S)-3-isopropylmalate = (2S)-2-isopropylmalate. It participates in amino-acid biosynthesis; L-leucine biosynthesis; L-leucine from 3-methyl-2-oxobutanoate: step 2/4. Catalyzes the isomerization between 2-isopropylmalate and 3-isopropylmalate, via the formation of 2-isopropylmaleate. The polypeptide is 3-isopropylmalate dehydratase small subunit (Nitrobacter hamburgensis (strain DSM 10229 / NCIMB 13809 / X14)).